The chain runs to 392 residues: Basic salivary proline-rich protein 1 (392 aa).

Positions 1-16 (MLLILLSVALLALSSA) are cleaved as a signal peptide. The residue at position 17 (Gln-17) is a Pyrrolidone carboxylic acid. Positions 19-28 (LNEDVSQEES) are enriched in polar residues. The tract at residues 19 to 392 (LNEDVSQEES…QGGRPSRPPQ (374 aa)) is disordered. Over residues 34–47 (GNPQGPSPQGGNKP) the composition is skewed to low complexity. Ser-40 carries the phosphoserine; alternate modification. A glycan (O-linked (Hex) serine; alternate) is linked at Ser-40. A compositionally biased stretch (pro residues) spans 48–83 (QGPPPPPGKPQGPPPQGGNKPQGPPPPGKPQGPPPQ). Tandem repeats lie at residues 53-72 (PPGK…QGPP), 73-92 (PPGK…SPRS), 93-112 (PPGK…QGPP), 114-133 (PPGK…QGPP), 134-153 (PPGK…SPRS), 154-173 (PPGK…QGPP), 175-194 (PPGK…QGPP), 195-214 (PPGK…SPRS), 215-234 (PPGK…QGPP), 236-255 (PPGK…QGPP), 256-275 (PPGK…SPQS), 276-295 (PPGK…QGPP), 297-316 (PPGK…QGPP), 317-336 (PPGK…QSAR), and 338-357 (PPGK…QGPP). Residues 53–357 (PPGKPQGPPP…QEGNNPQGPP (305 aa)) are 15 X 20 AA approximate tandem repeats of P-P-G-K-P-Q-G-P-P-[PAQ]-Q-[GE]-[GD]-[NKS]-[KSQRN]-[PRQS]-[QS] [GPS]-[PQAR]-[PSR]. O-linked (HexNAc...) serine glycosylation is present at Ser-87. Pro residues predominate over residues 91-144 (RSPPGKPQGPPPQGGNQPQGPPPPPGKPQGPPPQGGNKPQGPPPPGKPQGPPPQ). Ser-92 is modified (phosphoserine). Ser-150 is subject to Phosphoserine; alternate. A glycan (O-linked (Hex) serine; alternate) is linked at Ser-150. Pro residues-rich tracts occupy residues 152-205 (RSPP…PPPQ), 213-243 (RSPP…PQGP), 252-266 (QGPP…PPPQ), and 274-324 (QSPP…PQGP). The span at 325–334 (PAQGGSKSQS) shows a compositional bias: low complexity. A glycan (O-linked (HexNAc...) serine) is linked at Ser-330. Residues 354 to 392 (QGPPPPAGGNPQQPQAPPAGQPQGPPRPPQGGRPSRPPQ) are compositionally biased toward pro residues.

In terms of processing, O-glycosylated. O-glycosylation on Ser-87 is prevalent in head and neck cancer patients. O-Glycosylation on Ser-330 has a 5 times prevalence in head and neck cancers. Post-translationally, proteolytically cleaved at the tripeptide Xaa-Pro-Gln, where Xaa in the P(3) position is mostly lysine. The endoprotease may be of microbial origin. Pyroglutamate formation occurs on terminal Gln residues of cleaved peptides. Besides on the N-terminal of mature PBR1, pyroglutamate formation found on at least Gln-58.

Its subcellular location is the secreted. The polypeptide is Basic salivary proline-rich protein 1 (PRB1) (Homo sapiens (Human)).